We begin with the raw amino-acid sequence, 480 residues long: Glutamate--tRNA ligase (480 aa).

Residues 21 to 31 carry the 'HIGH' region motif; it reads PSPTGYLHVGG. C110, C112, C137, and H139 together coordinate Zn(2+). Positions 248-252 match the 'KMSKS' region motif; it reads KLSKR. K251 is an ATP binding site.

It belongs to the class-I aminoacyl-tRNA synthetase family. Glutamate--tRNA ligase type 1 subfamily. Monomer. The cofactor is Zn(2+).

Its subcellular location is the cytoplasm. The catalysed reaction is tRNA(Glu) + L-glutamate + ATP = L-glutamyl-tRNA(Glu) + AMP + diphosphate. Catalyzes the attachment of glutamate to tRNA(Glu) in a two-step reaction: glutamate is first activated by ATP to form Glu-AMP and then transferred to the acceptor end of tRNA(Glu). In Histophilus somni (strain 129Pt) (Haemophilus somnus), this protein is Glutamate--tRNA ligase.